We begin with the raw amino-acid sequence, 181 residues long: Large ribosomal subunit protein uL30 (181 aa).

It belongs to the universal ribosomal protein uL30 family. As to quaternary structure, part of the 50S ribosomal subunit.

This Hyperthermus butylicus (strain DSM 5456 / JCM 9403 / PLM1-5) protein is Large ribosomal subunit protein uL30.